Consider the following 66-residue polypeptide: Large ribosomal subunit protein uL30 (66 aa).

It belongs to the universal ribosomal protein uL30 family. In terms of assembly, part of the 50S ribosomal subunit.

This is Large ribosomal subunit protein uL30 from Brucella anthropi (strain ATCC 49188 / DSM 6882 / CCUG 24695 / JCM 21032 / LMG 3331 / NBRC 15819 / NCTC 12168 / Alc 37) (Ochrobactrum anthropi).